The sequence spans 94 residues: Defensin-like protein 21 (94 aa).

An N-terminal signal peptide occupies residues 1–26 (MVRTNVVSFVLFAAIVLCIGSIQIDG). 4 cysteine pairs are disulfide-bonded: Cys-41–Cys-92, Cys-51–Cys-79, Cys-65–Cys-88, and Cys-69–Cys-90.

The protein belongs to the DEFL family.

It is found in the secreted. The polypeptide is Defensin-like protein 21 (Arabidopsis thaliana (Mouse-ear cress)).